A 392-amino-acid chain; its full sequence is Protein FAM185A (392 aa).

Residues 39 to 60 form a disordered region; that stretch reads YSSGGSERWPGSETEVPPPGPG.

This chain is Protein FAM185A (FAM185A), found in Homo sapiens (Human).